We begin with the raw amino-acid sequence, 507 residues long: MFS transporter fsa7 (507 aa).

The disordered stretch occupies residues 1 to 65 (MATKDPAVTT…PDDPEHPLNW (65 aa)). Asn64 carries an N-linked (GlcNAc...) asparagine glycan. The helical transmembrane segment at 72-92 (LHLVIVSLFTLAANLAATMFA) threads the bilayer. Asn106 is a glycosylation site (N-linked (GlcNAc...) asparagine). The next 5 helical transmembrane spans lie at 111–131 (AMTVSLYVLGFALGPLLLAPL), 146–166 (FVYIAFTIGCAFSTNVAMFLV), 169–189 (IICGCAASGPMSIGGGTVADL), 200–220 (ALFTVGPLLGPVIGPIIGGFV), and 228–248 (WTFRIILIFSGLIGVATVIFM). Asn252 carries N-linked (GlcNAc...) asparagine glycosylation. Helical transmembrane passes span 302–322 (PIVLLVSLYTGILFGLIFLLF), 341–361 (GLAYLGLGIGMILGLVLFSVL), 379–399 (LILMKWLGPVTPLGLFIYGWT), 406–426 (WIVPIIGTFVVGFGSLFVVIP), 429–449 (IYLVDSFGAEAAASAMAANLL), and 472–492 (GWGNSVLGFICLLFTPVPWFF).

Belongs to the major facilitator superfamily.

Its subcellular location is the cell membrane. Its function is as follows. Efflux pump that might be required for efficient secretion of fusarisetin A or other secondary metabolies produced by the fusarisetin A gene cluster. The sequence is that of MFS transporter fsa7 from Fusarium sp. (strain FN080326).